A 168-amino-acid chain; its full sequence is Small ribosomal subunit protein uS5 (168 aa).

In terms of domain architecture, S5 DRBM spans 13–76 (LQEKLIAVNR…EKARRNMVTV (64 aa)).

The protein belongs to the universal ribosomal protein uS5 family. Part of the 30S ribosomal subunit. Contacts proteins S4 and S8.

With S4 and S12 plays an important role in translational accuracy. In terms of biological role, located at the back of the 30S subunit body where it stabilizes the conformation of the head with respect to the body. The sequence is that of Small ribosomal subunit protein uS5 from Shewanella amazonensis (strain ATCC BAA-1098 / SB2B).